The sequence spans 176 residues: NAD(P)H-quinone oxidoreductase subunit J (176 aa).

Belongs to the complex I 30 kDa subunit family. In terms of assembly, NDH-1 can be composed of about 15 different subunits; different subcomplexes with different compositions have been identified which probably have different functions.

It is found in the cellular thylakoid membrane. It catalyses the reaction a plastoquinone + NADH + (n+1) H(+)(in) = a plastoquinol + NAD(+) + n H(+)(out). The catalysed reaction is a plastoquinone + NADPH + (n+1) H(+)(in) = a plastoquinol + NADP(+) + n H(+)(out). Functionally, NDH-1 shuttles electrons from an unknown electron donor, via FMN and iron-sulfur (Fe-S) centers, to quinones in the respiratory and/or the photosynthetic chain. The immediate electron acceptor for the enzyme in this species is believed to be plastoquinone. Couples the redox reaction to proton translocation, and thus conserves the redox energy in a proton gradient. Cyanobacterial NDH-1 also plays a role in inorganic carbon-concentration. The protein is NAD(P)H-quinone oxidoreductase subunit J of Prochlorococcus marinus subsp. pastoris (strain CCMP1986 / NIES-2087 / MED4).